The chain runs to 251 residues: MAIHADTHDDLRLFQTGEHACGYWSDRRARDLVLDPHDPRLGAIYPQALAWGFRRSGDLVYRPHCERCRACVPVRIAVDAFHPDRSQRRCLTRNQDLVVRVVAAERTDEQLALYRQYLKYRHPGGGMDEHGATEFDQFLIGGWSHGRFLEIREPAIAHLPGRLLAVAVTDVTEHALSAVYTFYAPEAAARSLGTFAILQQIQWAQRERRAHVYLGYWIEGHAKMNYKRRFSALEAYDGRHWCDLPAHPSGT.

Belongs to the R-transferase family. Bpt subfamily.

It is found in the cytoplasm. The catalysed reaction is N-terminal L-glutamyl-[protein] + L-leucyl-tRNA(Leu) = N-terminal L-leucyl-L-glutamyl-[protein] + tRNA(Leu) + H(+). It catalyses the reaction N-terminal L-aspartyl-[protein] + L-leucyl-tRNA(Leu) = N-terminal L-leucyl-L-aspartyl-[protein] + tRNA(Leu) + H(+). In terms of biological role, functions in the N-end rule pathway of protein degradation where it conjugates Leu from its aminoacyl-tRNA to the N-termini of proteins containing an N-terminal aspartate or glutamate. This chain is Aspartate/glutamate leucyltransferase, found in Xanthomonas oryzae pv. oryzae (strain MAFF 311018).